The chain runs to 230 residues: Ethylene-responsive transcription factor ERF012 (230 aa).

A compositionally biased stretch (basic and acidic residues) spans 1-17 (MVKQERKIQTSSTKKEM). Residues 1–51 (MVKQERKIQTSSTKKEMPLSSSPSSSSSSSSSSSSSSCKNKNKKSKIKKYK) form a disordered region. Positions 20-39 (SSSPSSSSSSSSSSSSSSCK) are enriched in low complexity. Over residues 40–51 (NKNKKSKIKKYK) the composition is skewed to basic residues. A DNA-binding region (AP2/ERF) is located at residues 49-106 (KYKGVRMRSWGSWVSEIRAPNQKTRIWLGSYSTAEAAARAYDVALLCLKGPQANLNFP).

The protein belongs to the AP2/ERF transcription factor family. ERF subfamily. As to expression, expressed cotyledons, ovules and seeds of immature siliques.

The protein localises to the nucleus. Functionally, transcriptional activator involved in the regulation of plant development and tolerance to abiotic stresses. Involved in salt and osmotic stress response pathways. May be regulated by the stress-related genes RD29A, RD22, DREB1A or P5CS during stress response. Binds to the GCC-box pathogenesis-related promoter element. May be involved in the regulation of gene expression by stress factors and by components of stress signal transduction pathways. This Arabidopsis thaliana (Mouse-ear cress) protein is Ethylene-responsive transcription factor ERF012 (ERF012).